The primary structure comprises 384 residues: S-adenosylmethionine synthase (384 aa).

ATP is bound at residue His-15. Residue Asp-17 participates in Mg(2+) binding. Glu-43 is a K(+) binding site. Residues Glu-56 and Gln-99 each coordinate L-methionine. Residues 99-109 (QSPDINQGVDK) form a flexible loop region. Residues 164–166 (DAK), 230–231 (RF), Asp-239, 245–246 (RK), Ala-262, and Lys-266 each bind ATP. Asp-239 contributes to the L-methionine binding site. Position 270 (Lys-270) interacts with L-methionine.

The protein belongs to the AdoMet synthase family. As to quaternary structure, homotetramer; dimer of dimers. Requires Mg(2+) as cofactor. K(+) is required as a cofactor.

Its subcellular location is the cytoplasm. It catalyses the reaction L-methionine + ATP + H2O = S-adenosyl-L-methionine + phosphate + diphosphate. It functions in the pathway amino-acid biosynthesis; S-adenosyl-L-methionine biosynthesis; S-adenosyl-L-methionine from L-methionine: step 1/1. Functionally, catalyzes the formation of S-adenosylmethionine (AdoMet) from methionine and ATP. The overall synthetic reaction is composed of two sequential steps, AdoMet formation and the subsequent tripolyphosphate hydrolysis which occurs prior to release of AdoMet from the enzyme. The sequence is that of S-adenosylmethionine synthase from Vibrio vulnificus (strain YJ016).